Reading from the N-terminus, the 301-residue chain is Cilia- and flagella-associated protein 161 (301 aa).

The protein localises to the cytoplasm. The protein resides in the cytoskeleton. It is found in the cilium axoneme. In terms of biological role, microtubule inner protein (MIP) part of the dynein-decorated doublet microtubules (DMTs) in cilia axoneme, which is required for motile cilia beating. The polypeptide is Cilia- and flagella-associated protein 161 (Danio rerio (Zebrafish)).